Reading from the N-terminus, the 540-residue chain is Chaperonin GroEL 3 (540 aa).

Residues 30–33, lysine 51, 87–91, glycine 415, 480–482, and aspartate 496 contribute to the ATP site; these read TLGP, DGTTT, and NAA.

It belongs to the chaperonin (HSP60) family. As to quaternary structure, forms a cylinder of 14 subunits composed of two heptameric rings stacked back-to-back. Interacts with the co-chaperonin GroES.

It is found in the cytoplasm. It carries out the reaction ATP + H2O + a folded polypeptide = ADP + phosphate + an unfolded polypeptide.. In terms of biological role, together with its co-chaperonin GroES, plays an essential role in assisting protein folding. The GroEL-GroES system forms a nano-cage that allows encapsulation of the non-native substrate proteins and provides a physical environment optimized to promote and accelerate protein folding. The chain is Chaperonin GroEL 3 from Bradyrhizobium sp. (strain BTAi1 / ATCC BAA-1182).